The chain runs to 396 residues: LIM/homeobox protein Lhx9 (396 aa).

LIM zinc-binding domains lie at 69–130 and 131–193; these read ALCA…RFSV and QRCA…LIQG. Disordered regions lie at residues 248–272, 328–365, and 377–396; these read ENDADHLDRDQQPYPPSQKTKRMRT, RQENGGVDKADGTSLPPPSSDSGALTPPSTATTLTDLT, and SSLDSHESGSPPQTTLTNLF. Positions 267-326 form a DNA-binding region, homeobox; it reads TKRMRTSFKHHQLRTMKSYFAINHNPDAKDLKQLAQKTGLTKRVLQVWFQNARAKFRRNV. Low complexity predominate over residues 352–365; sequence LTPPSTATTLTDLT. Positions 384 to 396 are enriched in polar residues; that stretch reads SGSPPQTTLTNLF.

It is found in the nucleus. Functionally, may be involved in gonadal development. The protein is LIM/homeobox protein Lhx9 (lhx9) of Danio rerio (Zebrafish).